Reading from the N-terminus, the 190-residue chain is Female-specific histamine-binding protein 2 (190 aa).

A signal peptide spans 1-19 (MKLLILSLALVLALSQVKG). Histamine contacts are provided by Ser39, Asp43, Tyr55, Asp58, Trp61, Glu101, Phe117, Tyr119, Phe127, Asp139, Glu154, and Trp156. 2 disulfides stabilise this stretch: Cys67–Cys188 and Cys138–Cys167.

The protein belongs to the calycin superfamily. Histamine-binding salivary protein family. Monomer. As to expression, expressed in salivary glands.

It localises to the secreted. Its function is as follows. Salivary tick protein that acts by scavenging histamine at the wound site, outcompeting histamine receptors for histamine, thereby overcoming host inflammatory responses. Binds histamine with a high-affinity (Kd=1.7 nM). Contains two binding histamine sites (H and L), that appear to bind histamine with differing affinities (high and low). This chain is Female-specific histamine-binding protein 2, found in Rhipicephalus appendiculatus (Brown ear tick).